A 255-amino-acid polypeptide reads, in one-letter code: BPI fold-containing family A member 1 (255 aa).

The N-terminal stretch at 1 to 19 is a signal peptide; that stretch reads MFHIGSLVVLCGLLAPTTA. The interval 87-92 is important for surfactant activity and antibacterial properties; that stretch reads LLGSLL. N-linked (GlcNAc...) asparagine glycosylation is found at Asn-157, Asn-178, and Asn-205. A disulfide bridge links Cys-179 with Cys-223.

It belongs to the BPI/LBP/Plunc superfamily. Plunc family. As to quaternary structure, monomer. Interacts (via N-terminus) with SCNN1B, a subunit of the heterotrimeric epithelial sodium channel (ENaC); this inhibits proteolytic activation of ENaC. In terms of tissue distribution, expressed in trachea, and at lower levels in nasal epithelium.

It is found in the secreted. In terms of biological role, lipid-binding protein which shows high specificity for the surfactant phospholipid dipalmitoylphosphatidylcholine (DPPC). Plays a role in the innate immune responses of the upper airways. Reduces the surface tension in secretions from airway epithelia and inhibits the formation of biofilm by pathogenic Gram-negative bacteria, such as P.aeruginosa and K.pneumoniae. Negatively regulates proteolytic cleavage of SCNN1G, an event that is required for activation of the epithelial sodium channel (ENaC), and thereby contributes to airway surface liquid homeostasis and proper clearance of mucus. Plays a role in the airway inflammatory response after exposure to irritants. May attract macrophages and neutrophils. The sequence is that of BPI fold-containing family A member 1 (BPIFA1) from Bos taurus (Bovine).